The primary structure comprises 211 residues: ATP phosphoribosyltransferase (211 aa).

Belongs to the ATP phosphoribosyltransferase family. Short subfamily. As to quaternary structure, heteromultimer composed of HisG and HisZ subunits.

The protein localises to the cytoplasm. It catalyses the reaction 1-(5-phospho-beta-D-ribosyl)-ATP + diphosphate = 5-phospho-alpha-D-ribose 1-diphosphate + ATP. It participates in amino-acid biosynthesis; L-histidine biosynthesis; L-histidine from 5-phospho-alpha-D-ribose 1-diphosphate: step 1/9. Functionally, catalyzes the condensation of ATP and 5-phosphoribose 1-diphosphate to form N'-(5'-phosphoribosyl)-ATP (PR-ATP). Has a crucial role in the pathway because the rate of histidine biosynthesis seems to be controlled primarily by regulation of HisG enzymatic activity. The sequence is that of ATP phosphoribosyltransferase from Bacillus cereus (strain ATCC 14579 / DSM 31 / CCUG 7414 / JCM 2152 / NBRC 15305 / NCIMB 9373 / NCTC 2599 / NRRL B-3711).